The following is a 339-amino-acid chain: Dihydroorotate dehydrogenase (quinone) (339 aa).

FMN is bound by residues 62-66 and Thr-86; that span reads AGMDK. Residue Lys-66 participates in substrate binding. 111 to 115 contacts substrate; sequence NRMGF. FMN is bound by residues Asn-139 and Asn-172. Asn-172 provides a ligand contact to substrate. Ser-175 functions as the Nucleophile in the catalytic mechanism. Asn-177 is a substrate binding site. FMN is bound by residues Lys-217 and Thr-245. Substrate is bound at residue 246 to 247; that stretch reads NT. Residues Gly-268, Gly-297, and 318-319 contribute to the FMN site; that span reads YS.

It belongs to the dihydroorotate dehydrogenase family. Type 2 subfamily. Monomer. FMN serves as cofactor.

Its subcellular location is the cell membrane. It carries out the reaction (S)-dihydroorotate + a quinone = orotate + a quinol. It participates in pyrimidine metabolism; UMP biosynthesis via de novo pathway; orotate from (S)-dihydroorotate (quinone route): step 1/1. Catalyzes the conversion of dihydroorotate to orotate with quinone as electron acceptor. The chain is Dihydroorotate dehydrogenase (quinone) from Shewanella sp. (strain MR-4).